The sequence spans 1008 residues: DNA polymerase catalytic subunit (1008 aa).

Belongs to the DNA polymerase type-B family.

Its subcellular location is the host nucleus. It carries out the reaction DNA(n) + a 2'-deoxyribonucleoside 5'-triphosphate = DNA(n+1) + diphosphate. The sequence is that of DNA polymerase catalytic subunit (9) from Equine herpesvirus 2 (strain 86/87) (EHV-2).